The following is a 178-amino-acid chain: Ribosome maturation factor RimM (178 aa).

The region spanning 100 to 178 is the PRC barrel domain; it reads AADEYYWYQL…VMRVEWDADF (79 aa).

Belongs to the RimM family. As to quaternary structure, binds ribosomal protein uS19.

Its subcellular location is the cytoplasm. Functionally, an accessory protein needed during the final step in the assembly of 30S ribosomal subunit, possibly for assembly of the head region. Essential for efficient processing of 16S rRNA. May be needed both before and after RbfA during the maturation of 16S rRNA. It has affinity for free ribosomal 30S subunits but not for 70S ribosomes. This chain is Ribosome maturation factor RimM, found in Pseudomonas putida (strain W619).